Consider the following 309-residue polypeptide: Integral membrane protein sed5 (309 aa).

The Cytoplasmic portion of the chain corresponds to 1–288; sequence MSFQDRTAEF…KFYERMSSNR (288 aa). The stretch at 37–66 forms a coiled coil; the sequence is KHQKSEFTRIAQKIANQINQTGEKLQKLSQ. A t-SNARE coiled-coil homology domain is found at 218–280; the sequence is DTYSQQRMSS…GSAQREIVKF (63 aa). A helical; Anchor for type IV membrane protein transmembrane segment spans residues 289–308; sequence ALLFKIFGIVIIFFLLWVLV. Position 309 (T309) is a topological domain, vesicular.

Belongs to the syntaxin family.

It is found in the membrane. The protein localises to the golgi apparatus membrane. Functionally, required for vesicular transport between the endoplasmic reticulum and the Golgi complex. Acts as a target organelle soluble NSF attachment protein receptor (t-SNARE). This Schizosaccharomyces pombe (strain 972 / ATCC 24843) (Fission yeast) protein is Integral membrane protein sed5 (sed5).